A 188-amino-acid polypeptide reads, in one-letter code: Putative manganese efflux pump MntP (188 aa).

6 consecutive transmembrane segments (helical) span residues 3–23, 41–61, 62–82, 107–129, 143–163, and 168–188; these read LSAT…ASIG, LIFG…GMLA, SQFV…FLGG, LLVT…LAFL, ATFL…PLLG, and ILGG…HFAG.

This sequence belongs to the MntP (TC 9.B.29) family.

The protein resides in the cell inner membrane. Functionally, probably functions as a manganese efflux pump. This Klebsiella pneumoniae (strain 342) protein is Putative manganese efflux pump MntP.